Consider the following 1106-residue polypeptide: Voltage-dependent calcium channel subunit alpha-2/delta-1 (1106 aa).

The first 26 residues, 1-26 (MAAGRPLAWTLTLWQAWLILIGPSSE), serve as a signal peptide directing secretion. Topologically, residues 27 to 1076 (EPFPSAVTIK…VLEDYTDCGG (1050 aa)) are extracellular. Asn94 is a glycosylation site (N-linked (GlcNAc...) asparagine). Ser121 is subject to Phosphoserine. Asn138 and Asn186 each carry an N-linked (GlcNAc...) asparagine glycan. The region spanning 255–432 (DMLILVDVSG…INTQEYLDVL (178 aa)) is the VWFA domain. A divalent metal cation contacts are provided by Asp261, Ser263, and Ser265. The MIDAS-like motif motif lies at 261 to 265 (DVSGS). Asn326 and Asn350 each carry an N-linked (GlcNAc...) asparagine glycan. A disulfide bridge connects residues Cys406 and Cys1062. The region spanning 448–539 (WTNVYLDALE…QPKPIGVGIP (92 aa)) is the Cache domain. 3 N-linked (GlcNAc...) asparagine glycosylation sites follow: Asn615, Asn784, and Asn891. The chain crosses the membrane as a helical span at residues 1077 to 1097 (VSGLNPSLWSIIGIQFVLLWL). Residues 1098–1106 (VSGSRHCLL) are Cytoplasmic-facing.

This sequence belongs to the calcium channel subunit alpha-2/delta family. As to quaternary structure, dimer formed of alpha-2-1 and delta-1 chains; disulfide-linked. Voltage-dependent calcium channels are multisubunit complexes, consisting of alpha-1 (CACNA1), alpha-2 (CACNA2D), beta (CACNB) and delta (CACNA2D) subunits in a 1:1:1:1 ratio. In terms of processing, proteolytically processed into subunits alpha-2-1 and delta-1 that are disulfide-linked. In terms of tissue distribution, skeletal muscle.

Its subcellular location is the membrane. It localises to the cell membrane. Functionally, the alpha-2/delta subunit of voltage-dependent calcium channels regulates calcium current density and activation/inactivation kinetics of the calcium channel. Plays an important role in excitation-contraction coupling. The polypeptide is Voltage-dependent calcium channel subunit alpha-2/delta-1 (CACNA2D1) (Oryctolagus cuniculus (Rabbit)).